Here is a 1733-residue protein sequence, read N- to C-terminus: Gag-Pol polyprotein (1733 aa).

G2 carries N-myristoyl glycine; by host lipidation. Over residues L108 to Q121 the composition is skewed to pro residues. Disordered stretches follow at residues L108–G218, K449–H469, and W511–I550. The short motif at P109–P112 is the PTAP/PSAP motif element. Positions L128–L132 match the LYPX(n)L motif motif. Positions P161–Y164 match the PPXY motif motif. Residue S190 is modified to Phosphoserine; by host. A coiled-coil region spans residues E436–L476. Residues K449–R464 are compositionally biased toward basic and acidic residues. Residues D500–K517 form a CCHC-type zinc finger. The span at R526–G535 shows a compositional bias: low complexity. In terms of domain architecture, Peptidase A2 spans V559 to L629. D564 acts as the Protease; shared with dimeric partner in catalysis. Positions 721, 771, 773, and 787 each coordinate RNA. A Reverse transcriptase domain is found at L739–L930. D807 contacts Mg(2+). RNA-binding residues include N851 and P853. 2 residues coordinate Mg(2+): D881 and D882. DNA is bound by residues R941, R955, R958, and F966. RNA-binding residues include K1054 and K1055. W1063 serves as a coordination point for DNA. K1082 provides a ligand contact to RNA. Residue R1113 participates in DNA binding. The RNase H type-1 domain maps to P1172 to M1318. D1181 serves as a coordination point for Mg(2+). Residues S1184 and L1186 each coordinate RNA. DNA is bound by residues Q1187, S1214, and Q1216. The Mg(2+) site is built by E1219 and D1240. R1242 and R1266 together coordinate RNA. 3 residues coordinate Mg(2+): D1310, D1453, and D1512. Positions R1442–P1600 constitute an Integrase catalytic domain.

Homohexamer. Further associates as homomultimer. The virus core is composed of a lattice formed from hexagonal rings, each containing six capsid monomers. As to quaternary structure, homodimer. The protease is a homodimer, whose active site consists of two apposed aspartic acid residues. The reverse transcriptase is a monomer. Requires Mg(2+) as cofactor. The cofactor is Mn(2+). Post-translationally, specific enzymatic cleavages by the viral protease yield mature proteins. The protease is released by autocatalytic cleavage. The polyprotein is cleaved during and after budding, this process is termed maturation. Sumoylated. Required for virus replication. In terms of processing, phosphorylated on serine residues.

The protein localises to the host cell membrane. It is found in the virion. It carries out the reaction DNA(n) + a 2'-deoxyribonucleoside 5'-triphosphate = DNA(n+1) + diphosphate. It catalyses the reaction Endonucleolytic cleavage to 5'-phosphomonoester.. Plays a role in budding and is processed by the viral protease during virion maturation outside the cell. During budding, it recruits, in a PPXY-dependent or independent manner, Nedd4-like ubiquitin ligases that conjugate ubiquitin molecules to Gag, or to Gag binding host factors. Interaction with HECT ubiquitin ligases probably link the viral protein to the host ESCRT pathway and facilitate release. In terms of biological role, targets Gag and gag-pol polyproteins to the plasma membrane via a multipartite membrane binding signal, that includes its myristoylated N-terminus. Also mediates nuclear localization of the pre-integration complex. Its function is as follows. Forms the spherical core of the virion that encapsulates the genomic RNA-nucleocapsid complex. Functionally, involved in the packaging and encapsidation of two copies of the genome. Binds with high affinity to conserved UCUG elements within the packaging signal, located near the 5'-end of the genome. This binding is dependent on genome dimerization. The aspartyl protease mediates proteolytic cleavages of Gag and Gag-Pol polyproteins during or shortly after the release of the virion from the plasma membrane. Cleavages take place as an ordered, step-wise cascade to yield mature proteins. This process is called maturation. Displays maximal activity during the budding process just prior to particle release from the cell. In terms of biological role, multifunctional enzyme that converts the viral dimeric RNA genome into dsDNA in the cytoplasm, shortly after virus entry into the cell. This enzyme displays a DNA polymerase activity that can copy either DNA or RNA templates, and a ribonuclease H (RNase H) activity that cleaves the RNA strand of RNA-DNA heteroduplexes in a partially processive 3' to 5' endonucleasic mode. Conversion of viral genomic RNA into dsDNA requires many steps. A tRNA binds to the primer-binding site (PBS) situated at the 5' end of the viral RNA. RT uses the 3' end of the tRNA primer to perform a short round of RNA-dependent minus-strand DNA synthesis. The reading proceeds through the U5 region and ends after the repeated (R) region which is present at both ends of viral RNA. The portion of the RNA-DNA heteroduplex is digested by the RNase H, resulting in a ssDNA product attached to the tRNA primer. This ssDNA/tRNA hybridizes with the identical R region situated at the 3' end of viral RNA. This template exchange, known as minus-strand DNA strong stop transfer, can be either intra- or intermolecular. RT uses the 3' end of this newly synthesized short ssDNA to perform the RNA-dependent minus-strand DNA synthesis of the whole template. RNase H digests the RNA template except for a polypurine tract (PPT) situated at the 5' end of the genome. It is not clear if both polymerase and RNase H activities are simultaneous. RNase H probably can proceed both in a polymerase-dependent (RNA cut into small fragments by the same RT performing DNA synthesis) and a polymerase-independent mode (cleavage of remaining RNA fragments by free RTs). Secondly, RT performs DNA-directed plus-strand DNA synthesis using the PPT that has not been removed by RNase H as primers. PPT and tRNA primers are then removed by RNase H. The 3' and 5' ssDNA PBS regions hybridize to form a circular dsDNA intermediate. Strand displacement synthesis by RT to the PBS and PPT ends produces a blunt ended, linear dsDNA copy of the viral genome that includes long terminal repeats (LTRs) at both ends. Its function is as follows. Catalyzes viral DNA integration into the host chromosome, by performing a series of DNA cutting and joining reactions. This enzyme activity takes place after virion entry into a cell and reverse transcription of the RNA genome in dsDNA. The first step in the integration process is 3' processing. This step requires a complex comprising the viral genome, matrix protein and integrase. This complex is called the pre-integration complex (PIC). The integrase protein removes 2 nucleotides from each 3' end of the viral DNA, leaving recessed CA OH's at the 3' ends. In the second step that requires cell division, the PIC enters cell nucleus. In the third step, termed strand transfer, the integrase protein joins the previously processed 3' ends to the 5' ends of strands of target cellular DNA at the site of integration. The last step is viral DNA integration into host chromosome. The chain is Gag-Pol polyprotein (gag-pol) from Homo sapiens (Human).